We begin with the raw amino-acid sequence, 124 residues long: Ribonuclease pancreatic A (124 aa).

The segment at 1–24 is disordered; sequence AESSAMKFERQHVDSGGSSSSNAN. Lysine 7 and arginine 10 together coordinate substrate. Residue histidine 12 is the Proton acceptor of the active site. 4 disulfide bridges follow: cysteine 26–cysteine 84, cysteine 40–cysteine 95, cysteine 58–cysteine 110, and cysteine 65–cysteine 72. Substrate is bound by residues 41–45, lysine 66, and arginine 85; that span reads KPVNT. Histidine 119 serves as the catalytic Proton donor.

Belongs to the pancreatic ribonuclease family. Pancreas.

The protein localises to the secreted. The enzyme catalyses an [RNA] containing cytidine + H2O = an [RNA]-3'-cytidine-3'-phosphate + a 5'-hydroxy-ribonucleotide-3'-[RNA].. It catalyses the reaction an [RNA] containing uridine + H2O = an [RNA]-3'-uridine-3'-phosphate + a 5'-hydroxy-ribonucleotide-3'-[RNA].. In Cavia porcellus (Guinea pig), this protein is Ribonuclease pancreatic A.